A 287-amino-acid polypeptide reads, in one-letter code: Energy-coupling factor transporter ATP-binding protein EcfA (287 aa).

The 234-residue stretch at 19–252 (FEIQNVSFSY…EEFLASSALD (234 aa)) folds into the ABC transporter domain. 52–59 (GHNGSGKS) serves as a coordination point for ATP.

Belongs to the ABC transporter superfamily. Energy-coupling factor EcfA family. In terms of assembly, forms a stable energy-coupling factor (ECF) transporter complex composed of 2 membrane-embedded substrate-binding proteins (S component), 2 ATP-binding proteins (A component) and 2 transmembrane proteins (T component).

Its subcellular location is the cell membrane. In terms of biological role, ATP-binding (A) component of a common energy-coupling factor (ECF) ABC-transporter complex. Unlike classic ABC transporters this ECF transporter provides the energy necessary to transport a number of different substrates. This Malacoplasma penetrans (strain HF-2) (Mycoplasma penetrans) protein is Energy-coupling factor transporter ATP-binding protein EcfA.